An 828-amino-acid chain; its full sequence is Periplasmic nitrate reductase (828 aa).

The segment at residues 1 to 32 (MNLSRRDFMKANAAMAAATAAGLSIPVKNVEA) is a signal peptide (tat-type signal). Residues 37–93 (IKWDKAVCRFCGTGCAVLVGTKDGRVVASQGDPDAEVNRGLNCIKGYFLPKIMYGKD) form the 4Fe-4S Mo/W bis-MGD-type domain. [4Fe-4S] cluster is bound by residues Cys44, Cys47, Cys51, and Cys79. Residues Lys81, Gln148, Asn173, Cys177, 210–217 (WGSNMAEM), 241–245 (STFEH), Met371, Gln375, Asn481, 507–508 (SD), Lys530, Asp557, and 717–726 (TGRVLEHWHT) each bind Mo-bis(molybdopterin guanine dinucleotide). Phe793 contributes to the substrate binding site. Mo-bis(molybdopterin guanine dinucleotide) contacts are provided by Asn801 and Lys818.

The protein belongs to the prokaryotic molybdopterin-containing oxidoreductase family. NasA/NapA/NarB subfamily. In terms of assembly, component of the periplasmic nitrate reductase NapAB complex composed of NapA and NapB. It depends on [4Fe-4S] cluster as a cofactor. The cofactor is Mo-bis(molybdopterin guanine dinucleotide). Post-translationally, predicted to be exported by the Tat system. The position of the signal peptide cleavage has not been experimentally proven.

It localises to the periplasm. It carries out the reaction 2 Fe(II)-[cytochrome] + nitrate + 2 H(+) = 2 Fe(III)-[cytochrome] + nitrite + H2O. Functionally, catalytic subunit of the periplasmic nitrate reductase complex NapAB. Receives electrons from NapB and catalyzes the reduction of nitrate to nitrite. This is Periplasmic nitrate reductase from Aggregatibacter actinomycetemcomitans (Actinobacillus actinomycetemcomitans).